Consider the following 438-residue polypeptide: Dol-P-Man:Man(5)GlcNAc(2)-PP-Dol alpha-1,3-mannosyltransferase (438 aa).

S13 bears the Phosphoserine mark. 11 helical membrane-spanning segments follow: residues 41–61 (YTLL…FWVI), 95–115 (TGPL…FYAT), 123–143 (MAQN…FLIY), 149–169 (VPPF…SIFV), 172–192 (LFND…FLAQ), 203–223 (LAVS…FLLL), 231–251 (ALPK…PFLL), 289–309 (FHLA…LCRW), 332–352 (ALTP…GICF), 356–376 (LHYQ…WAMP), and 407–427 (AALH…PESF).

It belongs to the glycosyltransferase ALG3 family.

The protein resides in the endoplasmic reticulum membrane. The catalysed reaction is an alpha-D-Man-(1-&gt;2)-alpha-D-Man-(1-&gt;2)-alpha-D-Man-(1-&gt;3)-[alpha-D-Man-(1-&gt;6)]-beta-D-Man-(1-&gt;4)-beta-D-GlcNAc-(1-&gt;4)-alpha-D-GlcNAc-diphospho-di-trans,poly-cis-dolichol + a di-trans,poly-cis-dolichyl beta-D-mannosyl phosphate = an alpha-D-Man-(1-&gt;2)-alpha-D-Man-(1-&gt;2)-alpha-D-Man-(1-&gt;3)-[alpha-D-Man-(1-&gt;3)-alpha-D-Man-(1-&gt;6)]-beta-D-Man-(1-&gt;4)-beta-D-GlcNAc-(1-&gt;4)-alpha-D-GlcNAc-diphospho-di-trans,poly-cis-dolichol + a di-trans,poly-cis-dolichyl phosphate + H(+). It functions in the pathway protein modification; protein glycosylation. In terms of biological role, dol-P-Man:Man(5)GlcNAc(2)-PP-Dol alpha-1,3-mannosyltransferase that operates in the biosynthetic pathway of dolichol-linked oligosaccharides, the glycan precursors employed in protein asparagine (N)-glycosylation. The assembly of dolichol-linked oligosaccharides begins on the cytosolic side of the endoplasmic reticulum membrane and finishes in its lumen. The sequential addition of sugars to dolichol pyrophosphate produces dolichol-linked oligosaccharides containing fourteen sugars, including two GlcNAcs, nine mannoses and three glucoses. Once assembled, the oligosaccharide is transferred from the lipid to nascent proteins by oligosaccharyltransferases. In the lumen of the endoplasmic reticulum, adds the first dolichyl beta-D-mannosyl phosphate derived mannose in an alpha-1,3 linkage to Man(5)GlcNAc(2)-PP-dolichol to produce Man(6)GlcNAc(2)-PP-dolichol. Man(6)GlcNAc(2)-PP-dolichol is a substrate for ALG9, the following enzyme in the biosynthetic pathway. The polypeptide is Dol-P-Man:Man(5)GlcNAc(2)-PP-Dol alpha-1,3-mannosyltransferase (Mus musculus (Mouse)).